The following is a 322-amino-acid chain: Lignin-forming anionic peroxidase (322 aa).

The first 27 residues, 1–27 (MNTPTQSFRAKAAIFSLLLLSCMQCHA), serve as a signal peptide directing secretion. Glutamine 28 is modified (pyrrolidone carboxylic acid). 4 disulfide bridges follow: cysteine 38–cysteine 118, cysteine 71–cysteine 76, cysteine 124–cysteine 318, and cysteine 203–cysteine 229. Histidine 69 (proton acceptor) is an active-site residue. Ca(2+) contacts are provided by aspartate 70, valine 73, glycine 75, aspartate 77, and serine 79. Position 166 (proline 166) interacts with substrate. Histidine 196 contacts heme b. Threonine 197 provides a ligand contact to Ca(2+). Residue asparagine 213 is glycosylated (N-linked (GlcNAc...) asparagine). Positions 242, 245, and 250 each coordinate Ca(2+).

Belongs to the peroxidase family. Classical plant (class III) peroxidase subfamily. Ca(2+) serves as cofactor. The cofactor is heme b. Mesophyll protoplasts and to a much lesser extent, roots and germinating seeds.

It localises to the secreted. The catalysed reaction is 2 a phenolic donor + H2O2 = 2 a phenolic radical donor + 2 H2O. Its function is as follows. Removal of H(2)O(2), oxidation of toxic reductants, biosynthesis and degradation of lignin, suberization, auxin catabolism, response to environmental stresses such as wounding, pathogen attack and oxidative stress. These functions might be dependent on each isozyme/isoform in each plant tissue. Plays an integral role in secondary cell wall biosynthesis by the polymerization of cinnamyl alcohols into lignin and by forming rigid cross-links between cellulose, pectin, hydroxy-proline-rich glycoproteins, and lignin. This chain is Lignin-forming anionic peroxidase, found in Nicotiana sylvestris (Wood tobacco).